A 185-amino-acid chain; its full sequence is CASP-like protein SELMODRAFT_413556 (185 aa).

At 1-89 (MATLPLSLIF…AVTVLFYLAK (89 aa)) the chain is on the cytoplasmic side. The helical transmembrane segment at 90 to 110 (LVFGILGLALSIIWLLHIIVF) threads the bilayer. Topologically, residues 111–131 (MLVNPPAFPFLNQVFIQLDSA) are extracellular. A helical transmembrane segment spans residues 132–152 (WGLLGTTAFAIFCYYLIMSVI). Residues 153–163 (SGEMHSIHPMK) are Cytoplasmic-facing. The helical transmembrane segment at 164–184 (YQGTLMNSFLFNVAIILLCST) threads the bilayer. Position 185 (arginine 185) is a topological domain, extracellular.

It belongs to the Casparian strip membrane proteins (CASP) family. Homodimer and heterodimers.

The protein resides in the cell membrane. The sequence is that of CASP-like protein SELMODRAFT_413556 from Selaginella moellendorffii (Spikemoss).